The primary structure comprises 327 residues: Small ribosomal subunit protein RACK1 (327 aa).

7 WD repeats span residues 13–44 (AHTDMVTAIATPIDNSDTIVSASRDKSIIVWK), 61–91 (GHSHFVEDVVLSSDGQFALSGSWDGELRLWD), 103–133 (GHTKDVLSVAFSLDNRQIVSASRDRTIKLWN), 148–180 (GHRDWVSCVRFSPNTLQPTIVSASCDKTVKVWN), 192–222 (GHTGYVSTVAVSPDGSLCASGGKDGVVLLWD), 233–262 (EANSVIHALCFTPNRYWLCAATEQGIKIWD), and 293–323 (RKVIYCTSLNWSADGSTLFSGYTDGVIRVWG).

It belongs to the WD repeat G protein beta family. Ribosomal protein RACK1 subfamily.

The sequence is that of Small ribosomal subunit protein RACK1 (GB1) from Brassica napus (Rape).